Here is a 437-residue protein sequence, read N- to C-terminus: Trigger factor (437 aa).

In terms of domain architecture, PPIase FKBP-type spans 164–249 (GDRVTIDFAG…LKSVEAPKLP (86 aa)).

It belongs to the FKBP-type PPIase family. Tig subfamily.

The protein localises to the cytoplasm. The catalysed reaction is [protein]-peptidylproline (omega=180) = [protein]-peptidylproline (omega=0). Involved in protein export. Acts as a chaperone by maintaining the newly synthesized protein in an open conformation. Functions as a peptidyl-prolyl cis-trans isomerase. The polypeptide is Trigger factor (Azoarcus sp. (strain BH72)).